Reading from the N-terminus, the 204-residue chain is Putative 3-methyladenine DNA glycosylase (204 aa).

The protein belongs to the DNA glycosylase MPG family.

In Bacillus mycoides (strain KBAB4) (Bacillus weihenstephanensis), this protein is Putative 3-methyladenine DNA glycosylase.